The sequence spans 109 residues: Cytochrome bo(3) ubiquinol oxidase subunit 4 (109 aa).

The Cytoplasmic portion of the chain corresponds to 1–17; that stretch reads MSHSTDHSGASHGSVKT. The helical transmembrane segment at 18–36 threads the bilayer; it reads YMTGFILSIILTVIPFWMV. The Periplasmic portion of the chain corresponds to 37–45; sequence MTGAASPAV. Residues 46-64 traverse the membrane as a helical segment; it reads ILGTILAMAVVQVLVHLVC. Topologically, residues 65–80 are cytoplasmic; that stretch reads FLHMNTKSDEGWNMTA. The helical transmembrane segment at 81-99 threads the bilayer; sequence FVFTVLIIAILVVGSIWIM. At 100–109 the chain is on the periplasmic side; sequence WNLNYNMMMH.

Belongs to the cytochrome c oxidase bacterial subunit 4 family. In terms of assembly, heterooctamer of two A chains, two B chains, two C chains and two D chains.

The protein resides in the cell inner membrane. Functionally, cytochrome bo(3) ubiquinol terminal oxidase is the component of the aerobic respiratory chain of E.coli that predominates when cells are grown at high aeration. Has proton pump activity across the membrane in addition to electron transfer, pumping 2 protons/electron. This Escherichia coli O157:H7 protein is Cytochrome bo(3) ubiquinol oxidase subunit 4 (cyoD).